The chain runs to 252 residues: Hydrolase phiM (252 aa).

The active-site Charge relay system is Ser126.

Belongs to the LovG family.

It participates in secondary metabolite biosynthesis. Hydrolase; part of the gene cluster that mediates the biosynthesis of the antihypercholesterolemic agents phomoidrides which are dimeric anhydrides. Within the pathway, phiM releases the C12-fatty acyl chain from phiA. The pathway begins with the highly reducing polyketide synthase tstA that catalyzes the formation of a C12-fatty acyl-ACP, starting from one acetate and 5 malonate units. The hydrolase tstM is involved in the release of the C12-fatty acyl chain from phiA. The alkylcitrate synthase (ACS) tstJ and the alkylcitrate dehydratase (ACDH) tstI then give rise to decarboxylated monomeric anhydrides by coupling the C12-fatty acyl chain with oxalacetic acid. The cyclase tstC is responsible for the dimerization of the monomeric anhydrides which leads to the production of prephomoidride that contains the characteristic bicyclo[4.3.1]deca-1,6-diene system of phomoidrides. Iterative oxidation catalyzed by the alpha-ketoglutarate-dependent dioxygenase tstK produced then phomoidride A. Finally, the methyltransferase tstE converts phomoidride A to phomoidride B via an acetalization reaction. The phosphatidylethanolamine-binding protein tstB and tstN are not essential for dimerization and their functions have still to be determined. The sequence is that of Hydrolase phiM from Talaromyces stipitatus (strain ATCC 10500 / CBS 375.48 / QM 6759 / NRRL 1006) (Penicillium stipitatum).